The chain runs to 469 residues: Ubiquitin carboxyl-terminal hydrolase MINDY-1 (469 aa).

The tract at residues 1 to 85 (MEYHQPEDPA…APPGPTLGTL (85 aa)) is disordered. Residues 23 to 53 (ENHEVLAGPDEHPQDTDARDADGEAREREPA) are compositionally biased toward basic and acidic residues. Residues 66–76 (LESPLPEASSA) are compositionally biased toward low complexity. S103 is subject to Phosphoserine. The active-site Nucleophile is C137. H319 serves as the catalytic Proton acceptor. The ubiquitin-binding domain (UBD) stretch occupies residues 388 to 426 (QVDQDYLIALSLQQQQPRGPLGLTDLELAQQLQQEEYQQ). S441 is modified (phosphoserine). Residues 441 to 469 (SLQGRGATSGRPAGERRQRPKHESDCILL) form a disordered region. The span at 453–469 (AGERRQRPKHESDCILL) shows a compositional bias: basic and acidic residues.

This sequence belongs to the MINDY deubiquitinase family. FAM63 subfamily.

The enzyme catalyses Thiol-dependent hydrolysis of ester, thioester, amide, peptide and isopeptide bonds formed by the C-terminal Gly of ubiquitin (a 76-residue protein attached to proteins as an intracellular targeting signal).. Its function is as follows. Hydrolase that can specifically remove 'Lys-48'-linked conjugated ubiquitin from proteins. Has exodeubiquitinase activity and has a preference for long polyubiquitin chains. May play a regulatory role at the level of protein turnover. The polypeptide is Ubiquitin carboxyl-terminal hydrolase MINDY-1 (Homo sapiens (Human)).